A 168-amino-acid chain; its full sequence is Large ribosomal subunit protein uL10 (168 aa).

This sequence belongs to the universal ribosomal protein uL10 family. Part of the ribosomal stalk of the 50S ribosomal subunit. The N-terminus interacts with L11 and the large rRNA to form the base of the stalk. The C-terminus forms an elongated spine to which L12 dimers bind in a sequential fashion forming a multimeric L10(L12)X complex.

Its function is as follows. Forms part of the ribosomal stalk, playing a central role in the interaction of the ribosome with GTP-bound translation factors. This chain is Large ribosomal subunit protein uL10, found in Lacticaseibacillus casei (strain BL23) (Lactobacillus casei).